A 459-amino-acid polypeptide reads, in one-letter code: E3 ubiquitin-protein ligase RNF25 (459 aa).

Residues 18 to 128 enclose the RWD domain; that stretch reads SEVEVLESIY…EKGKEILTDN (111 aa). Residues Cys135, Cys138, Cys153, His155, His158, Cys161, Cys198, and Cys201 each coordinate Zn(2+). The RING-type zinc finger occupies 135 to 202; the sequence is CVICLYGFQE…AVGVQCPVCR (68 aa). Disordered stretches follow at residues 268 to 309 and 322 to 459; these read PPAP…PPLP and TRSN…KDGS. Residues 282–303 are compositionally biased toward polar residues; the sequence is KGSQPPSTLAAELSTSPAVQST. Basic and acidic residues-rich tracts occupy residues 349–370, 378–389, 413–424, and 446–459; these read QPER…RDTQ, PLKEPMDLKPEP, RTRDCVRWERSK, and TRRE…KDGS. Position 450 is a phosphoserine (Ser450).

It belongs to the RNF25 family. As to quaternary structure, interacts with UBE2D2, and may also interact with UBE2E1 and UBE2E3. Interacts with RELA/p65. Post-translationally, ubiquitinated; autoubiquitinated.

The protein resides in the cytoplasm. The enzyme catalyses S-ubiquitinyl-[E2 ubiquitin-conjugating enzyme]-L-cysteine + [acceptor protein]-L-lysine = [E2 ubiquitin-conjugating enzyme]-L-cysteine + N(6)-ubiquitinyl-[acceptor protein]-L-lysine.. It participates in protein modification; protein ubiquitination. In terms of biological role, E3 ubiquitin-protein ligase that plays a key role in the RNF14-RNF25 translation quality control pathway, a pathway that takes place when a ribosome has stalled during translation, and which promotes ubiquitination and degradation of translation factors on stalled ribosomes. Catalyzes ubiquitination of RPS27A in response to ribosome collisions, promoting activation of RNF14. RNF25 catalyzes ubiquitination of other ribosomal proteins on stalled ribosomes, such as RPL0, RPL1, RPL12, RPS13 and RPS17. Also involved in ubiquitination and degradation of stalled ETF1/eRF1. Independently of its function in the response to stalled ribosomes, mediates ubiquitination and subsequent proteasomal degradation of NKD2. May also stimulate transcription mediated by NF-kappa-B via its interaction with RELA/p65. The protein is E3 ubiquitin-protein ligase RNF25 of Homo sapiens (Human).